The chain runs to 373 residues: Glutamine synthetase (373 aa).

Ala-2 carries the N-acetylalanine modification. The segment at 2 to 25 (ATSASSHLNKGIKQVYMSLPQGEK) is required for glutamine-induced ubiquitination by CRL4(CRBN) and proteasomal degradation. Lys-11 and Lys-14 each carry N6-acetyllysine. A GS beta-grasp domain is found at 24 to 106 (EKVQAMYIWI…VFCEVFKYNR (83 aa)). Tyr-104 is subject to Phosphotyrosine. In terms of domain architecture, GS catalytic spans 113-373 (LRHTCKRIMD…TGDEPFQYKN (261 aa)). Position 134 (Glu-134) interacts with ATP. Residues Glu-134, Glu-136, Glu-196, and Glu-203 each contribute to the Mn(2+) site. 203–208 (EFQIGP) provides a ligand contact to ATP. 246–247 (NW) is an L-glutamate binding site. Residue His-253 coordinates Mn(2+). ATP is bound by residues 255 to 257 (NFS), Arg-319, and Arg-324. Arg-319 contacts L-glutamate. Residue 336–338 (YFE) coordinates ADP. Glu-338 contacts Mn(2+). Arg-340 lines the L-glutamate pocket. A Phosphoserine modification is found at Ser-343.

This sequence belongs to the glutamine synthetase family. As to quaternary structure, decamer; composed of two pentamers. Interacts with PALMD. Interacts with RHOJ. Interacts with BEST2; this interaction tethers a fraction of GLUL to the membrane, causing a decrease of cytosolic glutamine synthase (GS) activity and inhibits the chloride channel activity of BEST2 by affecting the gating at the aperture in the absence of intracellular glutamate. The cofactor is Mg(2+). It depends on Mn(2+) as a cofactor. Post-translationally, palmitoylated; undergoes autopalmitoylation. Acetylated by EP300/p300; acetylation is stimulated by increased glutamine levels and promotes ubiquitin-mediated proteasomal degradation. In terms of processing, ubiquitinated by ZNRF1. Ubiquitinated by the DCX (DDB1-CUL4-X-box) E3 ubiquitin-protein ligase complex called CRL4(CRBN), leading to proteasomal degradation.

Its subcellular location is the cytoplasm. It localises to the cytosol. It is found in the microsome. The protein localises to the mitochondrion. The protein resides in the cell membrane. The catalysed reaction is L-glutamate + NH4(+) + ATP = L-glutamine + ADP + phosphate + H(+). It carries out the reaction L-cysteinyl-[protein] + hexadecanoyl-CoA = S-hexadecanoyl-L-cysteinyl-[protein] + CoA. Glutamine synthetase activity is inhibited by methionine sulfoximine (MSO). Its function is as follows. Glutamine synthetase that catalyzes the ATP-dependent conversion of glutamate and ammonia to glutamine. Its role depends on tissue localization: in the brain, it regulates the levels of toxic ammonia and converts neurotoxic glutamate to harmless glutamine, whereas in the liver, it is one of the enzymes responsible for the removal of ammonia. Plays a key role in ammonium detoxification during erythropoiesis: the glutamine synthetase activity is required to remove ammonium generated by porphobilinogen deaminase (HMBS) during heme biosynthesis to prevent ammonium accumulation and oxidative stress. Essential for proliferation of fetal skin fibroblasts. Independently of its glutamine synthetase activity, required for endothelial cell migration during vascular development. Involved in angiogenesis by regulating membrane localization and activation of the GTPase RHOJ, possibly by promoting RHOJ palmitoylation. May act as a palmitoyltransferase for RHOJ: able to autopalmitoylate and then transfer the palmitoyl group to RHOJ. Plays a role in ribosomal 40S subunit biogenesis. Through the interaction with BEST2, inhibits BEST2 channel activity by affecting the gating at the aperture in the absence of intracellular L-glutamate, but sensitizes BEST2 to intracellular L-glutamate, which promotes the opening of BEST2 and thus relieves its inhibitory effect on BEST2. The protein is Glutamine synthetase of Canis lupus familiaris (Dog).